We begin with the raw amino-acid sequence, 105 residues long: Cytochrome c-553-like (105 aa).

An N-terminal signal peptide occupies residues 1 to 29 (MAGIVSLVILAVALFSFMNFDPYVSQVLA). Heme c is bound by residues C45, C48, H49, and M85.

Post-translationally, binds 1 heme c group covalently per subunit.

The chain is Cytochrome c-553-like (cytM) from Synechocystis sp. (strain ATCC 27184 / PCC 6803 / Kazusa).